The primary structure comprises 197 residues: Probable GTP-binding protein EngB (197 aa).

In terms of domain architecture, EngB-type G spans 22 to 195 (ELPEVALAGR…WKAIYALITE (174 aa)). GTP contacts are provided by residues 30 to 37 (GRSNVGKS), 57 to 61 (GKTQT), 75 to 78 (DVPG), 142 to 145 (TKLD), and 174 to 176 (FSA). Mg(2+) is bound by residues S37 and T59.

It belongs to the TRAFAC class TrmE-Era-EngA-EngB-Septin-like GTPase superfamily. EngB GTPase family. Mg(2+) serves as cofactor.

Necessary for normal cell division and for the maintenance of normal septation. The protein is Probable GTP-binding protein EngB of Exiguobacterium sp. (strain ATCC BAA-1283 / AT1b).